The primary structure comprises 179 residues: Endoribonuclease YbeY (179 aa).

Residues His148, His152, and His158 each contribute to the Zn(2+) site.

It belongs to the endoribonuclease YbeY family. It depends on Zn(2+) as a cofactor.

The protein resides in the cytoplasm. Functionally, single strand-specific metallo-endoribonuclease involved in late-stage 70S ribosome quality control and in maturation of the 3' terminus of the 16S rRNA. The sequence is that of Endoribonuclease YbeY from Prochlorococcus marinus (strain MIT 9215).